Reading from the N-terminus, the 520-residue chain is Cilia- and flagella-associated protein 157 (520 aa).

Residues 1–22 (MAPKKSVSKAGKELEVKKKGGK) form a disordered region. Basic and acidic residues predominate over residues 10–22 (AGKELEVKKKGGK). Coiled-coil stretches lie at residues 33-189 (LAKE…LEKK) and 236-372 (LQMA…QATS). The tract at residues 416–453 (PQKAACPHQESQSHGPPKESRPSIQLPRTGSLLPQLSD) is disordered. Residues 437-453 (PSIQLPRTGSLLPQLSD) are compositionally biased toward polar residues.

This sequence belongs to the CFAP157 family. As to quaternary structure, interacts with TUBB and TUBA4A. Interacts with CEP350.

The protein localises to the cytoplasm. It is found in the cytoskeleton. Its subcellular location is the cilium basal body. Its function is as follows. Specifically required during spermatogenesis for flagellum morphogenesis and sperm motility. May be required to suppress the formation of supernumerary axonemes and ensure a correct ultrastructure. The chain is Cilia- and flagella-associated protein 157 from Homo sapiens (Human).